The sequence spans 277 residues: Large ribosomal subunit protein uL2 (277 aa).

Residues 222 to 277 are disordered; sequence GVAMNPVDHPHGGGEGRTSGGRHPVTPWGKPTKGKKTRSNKATDKFIMRSRHQRKK.

It belongs to the universal ribosomal protein uL2 family. In terms of assembly, part of the 50S ribosomal subunit. Forms a bridge to the 30S subunit in the 70S ribosome.

Functionally, one of the primary rRNA binding proteins. Required for association of the 30S and 50S subunits to form the 70S ribosome, for tRNA binding and peptide bond formation. It has been suggested to have peptidyltransferase activity; this is somewhat controversial. Makes several contacts with the 16S rRNA in the 70S ribosome. This Brucella canis (strain ATCC 23365 / NCTC 10854 / RM-666) protein is Large ribosomal subunit protein uL2.